Here is a 254-residue protein sequence, read N- to C-terminus: Thiazole synthase (254 aa).

The Schiff-base intermediate with DXP role is filled by lysine 96. 1-deoxy-D-xylulose 5-phosphate-binding positions include glycine 157, 183–184 (AG), and 205–206 (NT).

The protein belongs to the ThiG family. In terms of assembly, homotetramer. Forms heterodimers with either ThiH or ThiS.

The protein localises to the cytoplasm. The catalysed reaction is [ThiS sulfur-carrier protein]-C-terminal-Gly-aminoethanethioate + 2-iminoacetate + 1-deoxy-D-xylulose 5-phosphate = [ThiS sulfur-carrier protein]-C-terminal Gly-Gly + 2-[(2R,5Z)-2-carboxy-4-methylthiazol-5(2H)-ylidene]ethyl phosphate + 2 H2O + H(+). It participates in cofactor biosynthesis; thiamine diphosphate biosynthesis. Functionally, catalyzes the rearrangement of 1-deoxy-D-xylulose 5-phosphate (DXP) to produce the thiazole phosphate moiety of thiamine. Sulfur is provided by the thiocarboxylate moiety of the carrier protein ThiS. In vitro, sulfur can be provided by H(2)S. This is Thiazole synthase from Clostridium perfringens (strain SM101 / Type A).